The sequence spans 377 residues: N5-carboxyaminoimidazole ribonucleotide synthase (377 aa).

Residues Arg93, Lys133, 138-144, 175-178, Glu183, His206, and 257-258 each bind ATP; these read GYDGKGQ, EEFV, and NE. The ATP-grasp domain occupies 97–287; that stretch reads KALLDHAGVR…QFENHLRAVC (191 aa).

This sequence belongs to the PurK/PurT family. As to quaternary structure, homodimer.

The catalysed reaction is 5-amino-1-(5-phospho-beta-D-ribosyl)imidazole + hydrogencarbonate + ATP = 5-carboxyamino-1-(5-phospho-D-ribosyl)imidazole + ADP + phosphate + 2 H(+). The protein operates within purine metabolism; IMP biosynthesis via de novo pathway; 5-amino-1-(5-phospho-D-ribosyl)imidazole-4-carboxylate from 5-amino-1-(5-phospho-D-ribosyl)imidazole (N5-CAIR route): step 1/2. Its function is as follows. Catalyzes the ATP-dependent conversion of 5-aminoimidazole ribonucleotide (AIR) and HCO(3)(-) to N5-carboxyaminoimidazole ribonucleotide (N5-CAIR). The protein is N5-carboxyaminoimidazole ribonucleotide synthase of Vibrio vulnificus (strain CMCP6).